Consider the following 25-residue polypeptide: Caerin-1.5 (25 aa).

Leu25 carries the leucine amide modification.

As to expression, expressed by the skin parotoid and/or rostral glands.

The protein localises to the secreted. In terms of biological role, antibacterial peptide, that adopts an alpha helical conformation which can disrupt bacterial membranes. Each caerin displays a different antimicrobial specificity. The chain is Caerin-1.5 from Ranoidea caerulea (Green tree frog).